The sequence spans 153 residues: MIEWQDLHHSELSVSQLYALLQLRCAVFVVEQNCPYQDIDGDDLTGDNRHILGWKNDELVAYARILKSDDDLEPVVIGRVIVSEALRGEKVGQQLMSKTLETCTHHWPDKPVYLGAQAHLQNFYQSFGFIPVTEVYEEDGIPHIGMAREVIQA.

Positions 7-151 constitute an N-acetyltransferase domain; it reads LHHSELSVSQ…PHIGMAREVI (145 aa).

The protein belongs to the UPF0039 (ElaA) family.

The chain is Protein ElaA (elaA) from Escherichia coli (strain K12).